A 457-amino-acid polypeptide reads, in one-letter code: MPNEQLRRMDAFTFPSYSFDLSTGEALFDYALTGPDGEQRFTEVITLPLPASPPSDERVATLGRVLELLHVIAGVSYYKTAAPHRLVLPAPLGPSAVALVTAVYTKGLAEYAYRNALPHVLRLRPEVPSGEVTPPVGYDTDGRRPLSAVGGGKDSIVSLEALRRDGLDPLPFSVNPNRVIEAVNVASGLPALAARRRIDPVLFDLNAAGALNGHIPVTAINSLIAVATSVLNGLGPVVMSNERSASDPNLIWDGHQINHQWSKGVEAEGLLRGALEEHAGLTDPYFSLLRQLSELHIARTFARIGGYDDVVTSCNAAFKLRGASDRWCRDCPKCRFVFLALAPFMPRERITRVFGGDLLADPAQLPGYRELLGVDGHKPFECVGEVEESVVALSLLGEQSGWRDAPVVSALIDAVPETAWKTAATSAVFTPGGPSFTPTRYADALGSLTEPARNLPG.

The protein belongs to the MurL family.

The catalysed reaction is UDP-N-acetyl-alpha-D-muramoyl-L-alanyl-L-glutamate + ATP + H2O = UDP-N-acetyl-alpha-D-muramoyl-L-alanyl-D-glutamate + AMP + diphosphate + H(+). Its pathway is cell wall biogenesis; peptidoglycan biosynthesis. Its function is as follows. Cell wall formation. Catalyzes epimerization of the terminal L-glutamate in UDP-N-acetyl-alpha-D-muramoyl-L-alanyl-L-glutamate. This is UDP-N-acetyl-alpha-D-muramoyl-L-alanyl-L-glutamate epimerase from Salinispora tropica (strain ATCC BAA-916 / DSM 44818 / JCM 13857 / NBRC 105044 / CNB-440).